Here is a 573-residue protein sequence, read N- to C-terminus: PCNA-interacting partner (573 aa).

Disordered regions lie at residues 470–505 and 531–560; these read VGKA…SKGK and PKVP…RGKL.

It belongs to the PARI family. Interacts with RAD51 and PCNA. Interacts with PARP1. Interacts with TASOR. Expressed in the ovary, Sertoli cells of the testis and in granular cells within the cerebellum.

It is found in the cytoplasm. Its subcellular location is the nucleus. Required to suppress inappropriate homologous recombination, thereby playing a central role DNA repair and in the maintenance of genomic stability. Antagonizes homologous recombination by interfering with the formation of the RAD51-DNA homologous recombination structure. Binds single-strand DNA and poly(A) homopolymers. Positively regulate the poly(ADP-ribosyl)ation activity of PARP1; however such function may be indirect. The protein is PCNA-interacting partner (Parpbp) of Mus musculus (Mouse).